We begin with the raw amino-acid sequence, 709 residues long: Alpha-1,2-mannosyltransferase MNN24 (709 aa).

The Cytoplasmic portion of the chain corresponds to 1-9; sequence MFSIPVSSK. The helical transmembrane segment at 10–30 threads the bilayer; the sequence is TVRLILVSLLLITLINILAAF. The Extracellular segment spans residues 31 to 709; sequence QRSTLSSWFP…KNHIEFLEIS (679 aa). Residue N317 is glycosylated (N-linked (GlcNAc...) asparagine).

This sequence belongs to the MNN1/MNT family.

The protein resides in the golgi apparatus membrane. It functions in the pathway protein modification; protein glycosylation. Functionally, alpha-1,2-mannosyltransferase required for cell wall integrity. Responsible for addition of the first alpha-1,2-linked mannose to form the branches on the mannan backbone of oligosaccharides. Addition of alpha-1,2-mannose is required for stabilization of the alpha-1,6-mannose backbone and hence regulates mannan fibril length; and is important for both immune recognition and virulence. This is Alpha-1,2-mannosyltransferase MNN24 (MNN24) from Candida albicans (strain SC5314 / ATCC MYA-2876) (Yeast).